Here is a 61-residue protein sequence, read N- to C-terminus: MAKTSMIIKAQRGNKFKVRERNRCPLCGRPRAYYRKFDMCRICLRKLSNLGQVPGVIKSSW.

Residues Cys24, Cys27, Cys40, and Cys43 each coordinate Zn(2+).

Belongs to the universal ribosomal protein uS14 family. Zinc-binding uS14 subfamily. As to quaternary structure, part of the 30S ribosomal subunit. Contacts proteins S3 and S10. The cofactor is Zn(2+).

Binds 16S rRNA, required for the assembly of 30S particles and may also be responsible for determining the conformation of the 16S rRNA at the A site. In Geobacter sp. (strain M21), this protein is Small ribosomal subunit protein uS14.